The primary structure comprises 494 residues: Neuronal acetylcholine receptor subunit alpha-6 (494 aa).

An N-terminal signal peptide occupies residues 1–25 (MLTSKGQGFLHGGLCLWLCVFTPFF). At 26–239 (KGCVGCATEE…ITYSFYIRRL (214 aa)) the chain is on the extracellular side. N-linked (GlcNAc...) asparagine glycans are attached at residues N54 and N171. Intrachain disulfides connect C158-C172 and C222-C223. 3 helical membrane passes run 240–264 (PMFY…VFYL), 272–290 (VTLC…LVIT), and 306–327 (YLLF…VLNI). At 328-465 (HYRTPTTHTM…WKYVAMVVDR (138 aa)) the chain is on the cytoplasmic side. Residue S401 is modified to Phosphoserine. A helical transmembrane segment spans residues 466 to 484 (VFLWVFIIVCVFGTAGLFL).

This sequence belongs to the ligand-gated ion channel (TC 1.A.9) family. Acetylcholine receptor (TC 1.A.9.1) subfamily. Alpha-6/CHRNA6 sub-subfamily. As to quaternary structure, neuronal AChR is composed of two different types of subunits: alpha and non-alpha (beta). CHRNA6/alpha-6 subunit can be combined to CHRNB2/beta-2, CHRNA4/alpha-4 and CHRNB3/beta-3 to give rise to functional receptors. Heteropentamers containing CHRNB3 have an stoichiometry of (CHRNA6:CHRNB2)2:CHRNB3. Interacts with LYPD6.

It localises to the synaptic cell membrane. The catalysed reaction is Ca(2+)(in) = Ca(2+)(out). It catalyses the reaction K(+)(in) = K(+)(out). It carries out the reaction Na(+)(in) = Na(+)(out). Activated by a myriad of ligands such as acetylcholine, cytisine and nicotine. CHRNA6 nAChR activity is inhibited by the antagonists alpha-conotoxin MII and PIA, a small disulfide-constrained peptides from cone snails. Functionally, component of neuronal acetylcholine receptors (nAChRs) that function as pentameric, ligand-gated cation channels with high calcium permeability among other activities. nAChRs are excitatory neurotrasnmitter receptors formed by a collection of nAChR subunits known to mediate synaptic transmission in the nervous system and the neuromuscular junction. Each nAchR subunit confers differential attributes to channel properties, including activation, deactivation and desensitization kinetics, pH sensitivity, cation permeability, and binding to allosteric modulators. CHRNA6 forms pentameric channels with CHRNB2, CHRNB3 and CHRNA4 that exhibit high sensitivity to ACh and nicotine and are predominantly expressed in only a few brain areas, including dopaminergic neurons, norepirephrine neurons and cells of the visual system. nAChrs containing CHRNA6 subunits mediate endogenous cholinergic modulation of dopamine and gamma-aminobutyric acid (GABA) release in response to nicotine at nerve terminals. This is Neuronal acetylcholine receptor subunit alpha-6 from Homo sapiens (Human).